Reading from the N-terminus, the 130-residue chain is Large ribosomal subunit protein eL32 (130 aa).

The protein belongs to the eukaryotic ribosomal protein eL32 family.

This is Large ribosomal subunit protein eL32 (rpl32e) from Pyrococcus abyssi (strain GE5 / Orsay).